The following is a 209-amino-acid chain: Cytidylate kinase (209 aa).

Position 9-17 (9-17 (GPAAAGKGT)) interacts with ATP.

It belongs to the cytidylate kinase family. Type 1 subfamily.

The protein localises to the cytoplasm. The catalysed reaction is CMP + ATP = CDP + ADP. The enzyme catalyses dCMP + ATP = dCDP + ADP. In Granulibacter bethesdensis (strain ATCC BAA-1260 / CGDNIH1), this protein is Cytidylate kinase.